Consider the following 85-residue polypeptide: Alpha-toxin BmalphaTx47 (85 aa).

The signal sequence occupies residues 1 to 19 (MNYLIVISFALLLMTGVQS). The region spanning 21-83 (RDAYIADSEN…VPIRISGSCR (63 aa)) is the LCN-type CS-alpha/beta domain. Intrachain disulfides connect C31/C82, C35/C55, C41/C65, and C45/C67.

Belongs to the long (4 C-C) scorpion toxin superfamily. Sodium channel inhibitor family. Alpha subfamily. In terms of tissue distribution, expressed by the venom gland.

The protein resides in the secreted. Alpha toxins bind voltage-independently at site-3 of sodium channels (Nav) and inhibit the inactivation of the activated channels, thereby blocking neuronal transmission. This toxin expressed with the pET-14b vector has low inhibitory activity on sodium channels (11.33% on rNav1.2/SCN2A, 15.96% on mNav1.4/SCN4A and 5.04% on hNav1.5/SCN5A). When expressed with the pET-28a vector, this toxin has higher inhibitory activities (44.12% on rNav1.2/SCN2A, 25.40% on mNav1.4/SCN4A and 65.34% on hNav1.5/SCN5A). This Olivierus martensii (Manchurian scorpion) protein is Alpha-toxin BmalphaTx47.